The sequence spans 233 residues: Pre-mRNA-splicing factor syf-2 (233 aa).

A compositionally biased stretch (polar residues) spans 1-16 (MSDSEQTSSGTASSGS). 2 disordered regions span residues 1–80 (MSDS…EDKG) and 95–119 (VTEKLEQKRKRKKNPDQGFASYEDM). Over residues 17–80 (KMKDFNQRFR…QDRKEAEDKG (64 aa)) the composition is skewed to basic and acidic residues. Positions 18-77 (MKDFNQRFRDLHKMRQKARKENHAQVVEEDRRKKLPKNFEAKKERDQWQVKELQDRKEAE) form a coiled coil.

Belongs to the SYF2 family. May be part of a spliceosome complex.

The protein resides in the nucleus. In terms of biological role, may be involved in pre-mRNA splicing. The protein is Pre-mRNA-splicing factor syf-2 of Caenorhabditis briggsae.